Here is a 309-residue protein sequence, read N- to C-terminus: Malate dehydrogenase (309 aa).

NAD(+) is bound by residues 10–15 and Asp34; that span reads GAGNVG. Substrate contacts are provided by Arg83 and Arg89. Residues Asn96 and 119-121 contribute to the NAD(+) site; that span reads VSN. Residues Asn121 and Arg152 each contribute to the substrate site. The Proton acceptor role is filled by His176.

This sequence belongs to the LDH/MDH superfamily. MDH type 3 family.

The catalysed reaction is (S)-malate + NAD(+) = oxaloacetate + NADH + H(+). In terms of biological role, catalyzes the reversible oxidation of malate to oxaloacetate. The polypeptide is Malate dehydrogenase (Heliobacterium modesticaldum (strain ATCC 51547 / Ice1)).